The chain runs to 460 residues: Elongation factor 1-alpha 3 (460 aa).

The tr-type G domain occupies 6-243 (KTHINIVVIG…DCIIPPQRPT (238 aa)). The G1 stretch occupies residues 15-22 (GHVDSGKS). Residues 71–75 (GITID) are G2. Residues 92 to 95 (DAPG) form a G3 region. Residues 154–157 (NKMD) form a G4 region. Positions 195–197 (SGF) are G5. Glutamate 302 and glutamate 375 each carry 5-glutamyl glycerylphosphorylethanolamine.

This sequence belongs to the TRAFAC class translation factor GTPase superfamily. Classic translation factor GTPase family. EF-Tu/EF-1A subfamily.

The protein localises to the cytoplasm. Functionally, this protein promotes the GTP-dependent binding of aminoacyl-tRNA to the A-site of ribosomes during protein biosynthesis. The chain is Elongation factor 1-alpha 3 (eft-3) from Oscheius tipulae.